Consider the following 496-residue polypeptide: Angiopoietin-2 (496 aa).

Residues 1-18 (MWQLVFLTLSCDLAVATA) form the signal peptide. Residues Asn90, Asn120, Asn134, Asn152, Asn241, and Asn304 are each glycosylated (N-linked (GlcNAc...) asparagine). Residues 167–249 (STNKLEKQIL…VNNSVLQKQQ (83 aa)) are a coiled coil. Positions 275–495 (KDEQIIFRDC…ATTMMIRPAD (221 aa)) constitute a Fibrinogen C-terminal domain. An intrachain disulfide couples Cys284 to Cys313. Ca(2+) contacts are provided by Asp429, Asp431, Cys433, and Cys435. Intrachain disulfides connect Cys433–Cys435 and Cys437–Cys450.

As to quaternary structure, interacts with TEK/TIE2, competing for the same binding site as ANGPT1. Interacts with ITGA5. Interacts with SVEP1/polydom. Interacts with THBD; this interaction significantly inhibits the generation of activated PC and TAFIa/CPB2 by the thrombin/thrombomodulin complex.

It localises to the secreted. In terms of biological role, binds to TEK/TIE2, competing for the ANGPT1 binding site, and modulating ANGPT1 signaling. Can induce tyrosine phosphorylation of TEK/TIE2 in the absence of ANGPT1. In the absence of angiogenic inducers, such as VEGF, ANGPT2-mediated loosening of cell-matrix contacts may induce endothelial cell apoptosis with consequent vascular regression. In concert with VEGF, it may facilitate endothelial cell migration and proliferation, thus serving as a permissive angiogenic signal. Involved in the regulation of lymphangiogenesis. This Bos taurus (Bovine) protein is Angiopoietin-2 (ANGPT2).